The sequence spans 195 residues: Nascent polypeptide-associated complex subunit alpha (195 aa).

2 disordered regions span residues 1-59 and 132-153; these read MTGS…SRSE and TREA…EEDS. Positions 7 to 16 are enriched in basic and acidic residues; the sequence is TRQKEVKEPQ. Positions 19 to 33 are enriched in acidic residues; that stretch reads VSDDSDNEAVEQELT. A compositionally biased stretch (basic and acidic residues) spans 47–59; the sequence is DHIDKQAKQSRSE. One can recognise an NAC-A/B domain in the interval 56–121; it reads SRSEKKARKL…AKIEDLTQHA (66 aa). Residues 142–153 are compositionally biased toward acidic residues; the sequence is EEDENEDVEEDS.

It belongs to the NAC-alpha family. As to quaternary structure, may be part of the nascent polypeptide-associated complex (NAC), which is a heterodimer of icd-2 and icd-1 (via NAC-A/B domains).

It is found in the cytoplasm. Functionally, may prevent inappropriate targeting of non-secretory polypeptides to the endoplasmic reticulum (ER). Plays a role in the response to heat stress. In Caenorhabditis elegans, this protein is Nascent polypeptide-associated complex subunit alpha.